Reading from the N-terminus, the 677-residue chain is MFSPRTEIENLRREINRHNQLYYVQDNPEISDSEYDALLRRLKELEEAHPELVTADSPTQRVGAEPLKAFGIVNHPYPLLSLANAFSDTELEAWYLRVKKLLGNAAFQIDCEPKMDGLAVALTYRNGKFTTGATRGDGFQGENITRNLRTIHSIPLNTEEDAPPVFEIRGEVYLPKEGFAKLNRERADKGLSLFANPRNAAAGSLRQLDPSVTAERPLDIFIYALGYAEDSLLPDSHWQILEYFSRLGFKINPRNRLVNTLEEAKEYYREMAENRDSLPYEADGVVFKVDSVSLQQKLGDAGREPRWAIAYKFPAEQVTTLLRKIGISVGRTGTLNPYAILEPVNVGGVVVKQASLHNEDDILRKDIREGDTVVIQRAGEVIPEVVAPVLAKRSPESKPFSMEETLFNPKLSRPACPVCGGEIYRPAGEAMHYCANVSCPAQFERQLEHFVSRGTMDIRGIGESLSVILAQEGLVKNVSDLYYLTAADLLKLPRMGEKSADNIIKAIADSKSRPLDRVIFGLGIRHVGNETAALLSSRYGDIWALAGAGLDELQTIPDIGAKIASSIKAYFSEEKNIAVIRRLETAGVKLASDQKPSYKPLPLSGVEFVVTGKLDSLSREEAQQKIRSLGGTAKDNVTKATRYLVVGADAGSKLAKARSMGVKELSEQEFINMLEQS.

Residues 32–36 (DSEYD), 81–82 (SL), and glutamate 112 each bind NAD(+). Lysine 114 (N6-AMP-lysine intermediate) is an active-site residue. NAD(+) contacts are provided by arginine 135, glutamate 171, lysine 288, and lysine 312. Residues cysteine 416, cysteine 419, cysteine 434, and cysteine 439 each contribute to the Zn(2+) site. Residues 598 to 677 (YKPLPLSGVE…QEFINMLEQS (80 aa)) form the BRCT domain.

Belongs to the NAD-dependent DNA ligase family. LigA subfamily. The cofactor is Mg(2+). Requires Mn(2+) as cofactor.

It carries out the reaction NAD(+) + (deoxyribonucleotide)n-3'-hydroxyl + 5'-phospho-(deoxyribonucleotide)m = (deoxyribonucleotide)n+m + AMP + beta-nicotinamide D-nucleotide.. In terms of biological role, DNA ligase that catalyzes the formation of phosphodiester linkages between 5'-phosphoryl and 3'-hydroxyl groups in double-stranded DNA using NAD as a coenzyme and as the energy source for the reaction. It is essential for DNA replication and repair of damaged DNA. The chain is DNA ligase from Dehalococcoides mccartyi (strain ATCC BAA-2266 / KCTC 15142 / 195) (Dehalococcoides ethenogenes (strain 195)).